An 892-amino-acid polypeptide reads, in one-letter code: DNA mismatch repair protein MutS (892 aa).

607 to 614 (GPNMSGKS) is an ATP binding site. Positions 833-854 (EESQLSFFGGEQSPKKQDKPVL) are disordered. Positions 845–854 (SPKKQDKPVL) are enriched in basic and acidic residues.

It belongs to the DNA mismatch repair MutS family.

Its function is as follows. This protein is involved in the repair of mismatches in DNA. It is possible that it carries out the mismatch recognition step. This protein has a weak ATPase activity. The protein is DNA mismatch repair protein MutS of Bacillus cereus (strain Q1).